We begin with the raw amino-acid sequence, 1347 residues long: Protocadherin-11 X-linked (1347 aa).

The N-terminal stretch at 1-23 is a signal peptide; sequence MDLLSGTYIFAVLLACVVFHSGA. The Extracellular portion of the chain corresponds to 24–812; the sequence is QEKNYTIREE…VSSPTSDYVK (789 aa). Cadherin domains follow at residues 26-139, 140-249, 250-355, 362-466, 467-570, 571-673, and 677-795; these read KNYT…APLF, PATV…HPVF, KETE…VPSI, NPIN…APVF, TQSF…SPVF, THNE…KPVF, and PSNY…APVT. Residues asparagine 27, asparagine 48, and asparagine 54 are each glycosylated (N-linked (GlcNAc...) asparagine). Asparagine 344 is a glycosylation site (N-linked (GlcNAc...) asparagine). Asparagine 553 is a glycosylation site (N-linked (GlcNAc...) asparagine). Asparagine 773 carries an N-linked (GlcNAc...) asparagine glycan. A helical transmembrane segment spans residues 813 to 833; that stretch reads ILVAAVAGTVTVVVVIFITAV. Residues 834–1347 lie on the Cytoplasmic side of the membrane; the sequence is VRCRQAPHLK…DSPIMEEHPL (514 aa). 4 disordered regions span residues 1031–1050, 1057–1091, 1097–1116, and 1325–1347; these read IWIH…GKSQ, LPEG…GYPQ, RATP…ESTF, and TFTP…EHPL.

It localises to the cell membrane. In terms of biological role, potential calcium-dependent cell-adhesion protein. The polypeptide is Protocadherin-11 X-linked (PCDH11X) (Pongo pygmaeus (Bornean orangutan)).